The following is a 234-amino-acid chain: Response regulator RppA (234 aa).

The 117-residue stretch at 2–118 (RILLVEDETD…ELLARLRALQ (117 aa)) folds into the Response regulatory domain. Residue Asp53 is modified to 4-aspartylphosphate. The ompR/PhoB-type DNA-binding region spans 126–232 (PQILTLGNFS…VPGQGYRFTL (107 aa)).

As to quaternary structure, interacts with histidine kinase Hik2; may accept phosphate from Hik2.

In terms of biological role, member of two-component regulatory system RppA/RppB, involved in the establishment of the appropriate stoichiometry between the 2 photosystems. It senses changes in the plastoquinone (PQ) redox poise. Another group shows this two-component pair, renamed NrsR/NrsS, controls the nickel-dependent expression of the nrsBACD operon; they suggest the photosystem-related activities seen earlier are due to the expression of NrsS (RppB) in the absence of its natural substrate NrsR (RppA). May accept phosphate from Hik2 in a possible Hik2/RppA two-component system. The polypeptide is Response regulator RppA (Synechocystis sp. (strain ATCC 27184 / PCC 6803 / Kazusa)).